The sequence spans 510 residues: Cytochrome P450 monooxygenase macH (510 aa).

Residues 7–29 traverse the membrane as a helical segment; that stretch reads LPVSLWLIAAGTFAVYHAIRAVY. Cys454 contributes to the heme binding site.

The protein belongs to the cytochrome P450 family. Heme serves as cofactor.

It localises to the membrane. Its pathway is secondary metabolite biosynthesis; terpenoid biosynthesis. In terms of biological role, cytochrome P450 monooxygenase; part of the gene cluster that mediates the biosynthesis of macrophorins, isoprenoid epoxycyclohexenones containing cyclized drimane moieties. The first step of the pathway is the synthesis of 6-methylsalicylic acid (6-MSA) by the polyketide synthase macA. 6-MSA is then converted to m-cresol by the decarboxylase macB. The cytochrome P450 monooxygenase macC then catalyzes the oxidation of m-cresol to toluquinol. Epoxidation of toluquinol is then performed by the short chain dehydrogenase macD, with the help of macE, and a further prenylation by macG leads to 7-deacetoxyyanuthone A. The next step is the hydroxylation of C-22 of 7-deacetoxyyanuthone A by the cytochrome P450 monooxygenase macH to yield 22-deacetylyanuthone A. O-Mevalon transferase macI then attaches mevalon to the hydroxyl group of 22-deacetylyanuthone A to produce yanuthone E. The terpene cyclase macJ catalyzes the cyclization of 22-deacetylyanuthone A to macrophorin A. MacJ is also able to catalyze cyclization of yanuthone E and 7-deacetoxyyanuthone A to their corresponding macrophorins. The macJ products can be further modified by macH and macJ, as well as by the FAD-dependent monooxygenase macF, to produce additional macrophorins, including 4'-oxomacrophorin A, 4'-oxomacrophorin D and 4'-oxomacrophorin E. This Penicillium terrestre protein is Cytochrome P450 monooxygenase macH.